A 246-amino-acid polypeptide reads, in one-letter code: Ribonuclease PH (246 aa).

Phosphate is bound by residues R91 and G129–R131.

It belongs to the RNase PH family. As to quaternary structure, homohexameric ring arranged as a trimer of dimers.

It catalyses the reaction tRNA(n+1) + phosphate = tRNA(n) + a ribonucleoside 5'-diphosphate. Functionally, phosphorolytic 3'-5' exoribonuclease that plays an important role in tRNA 3'-end maturation. Removes nucleotide residues following the 3'-CCA terminus of tRNAs; can also add nucleotides to the ends of RNA molecules by using nucleoside diphosphates as substrates, but this may not be physiologically important. Probably plays a role in initiation of 16S rRNA degradation (leading to ribosome degradation) during starvation. The chain is Ribonuclease PH from Burkholderia cenocepacia (strain ATCC BAA-245 / DSM 16553 / LMG 16656 / NCTC 13227 / J2315 / CF5610) (Burkholderia cepacia (strain J2315)).